The following is a 345-amino-acid chain: Phosphoribosylformylglycinamidine cyclo-ligase (345 aa).

The protein belongs to the AIR synthase family.

The protein localises to the cytoplasm. The enzyme catalyses 2-formamido-N(1)-(5-O-phospho-beta-D-ribosyl)acetamidine + ATP = 5-amino-1-(5-phospho-beta-D-ribosyl)imidazole + ADP + phosphate + H(+). It functions in the pathway purine metabolism; IMP biosynthesis via de novo pathway; 5-amino-1-(5-phospho-D-ribosyl)imidazole from N(2)-formyl-N(1)-(5-phospho-D-ribosyl)glycinamide: step 2/2. The protein is Phosphoribosylformylglycinamidine cyclo-ligase of Ligilactobacillus salivarius (strain UCC118) (Lactobacillus salivarius).